Here is a 310-residue protein sequence, read N- to C-terminus: Methionyl-tRNA formyltransferase (310 aa).

Residue 111-114 (SLLP) participates in (6S)-5,6,7,8-tetrahydrofolate binding.

The protein belongs to the Fmt family.

The enzyme catalyses L-methionyl-tRNA(fMet) + (6R)-10-formyltetrahydrofolate = N-formyl-L-methionyl-tRNA(fMet) + (6S)-5,6,7,8-tetrahydrofolate + H(+). Functionally, attaches a formyl group to the free amino group of methionyl-tRNA(fMet). The formyl group appears to play a dual role in the initiator identity of N-formylmethionyl-tRNA by promoting its recognition by IF2 and preventing the misappropriation of this tRNA by the elongation apparatus. The protein is Methionyl-tRNA formyltransferase of Nitrobacter hamburgensis (strain DSM 10229 / NCIMB 13809 / X14).